The chain runs to 232 residues: 2-C-methyl-D-erythritol 4-phosphate cytidylyltransferase (232 aa).

Belongs to the IspD/TarI cytidylyltransferase family. IspD subfamily.

It carries out the reaction 2-C-methyl-D-erythritol 4-phosphate + CTP + H(+) = 4-CDP-2-C-methyl-D-erythritol + diphosphate. The protein operates within isoprenoid biosynthesis; isopentenyl diphosphate biosynthesis via DXP pathway; isopentenyl diphosphate from 1-deoxy-D-xylulose 5-phosphate: step 2/6. In terms of biological role, catalyzes the formation of 4-diphosphocytidyl-2-C-methyl-D-erythritol from CTP and 2-C-methyl-D-erythritol 4-phosphate (MEP). This is 2-C-methyl-D-erythritol 4-phosphate cytidylyltransferase from Synechococcus sp. (strain ATCC 27144 / PCC 6301 / SAUG 1402/1) (Anacystis nidulans).